Here is a 238-residue protein sequence, read N- to C-terminus: Uridylate kinase (238 aa).

12–15 serves as a coordination point for ATP; that stretch reads KVSG. Residue Gly54 coordinates UMP. ATP-binding residues include Gly55 and Arg59. UMP is bound by residues Asp74 and 135 to 142; that span reads TGNPYFTT. The ATP site is built by Thr162, Asn163, Tyr168, and Asp171.

The protein belongs to the UMP kinase family. Homohexamer.

It localises to the cytoplasm. It catalyses the reaction UMP + ATP = UDP + ADP. It functions in the pathway pyrimidine metabolism; CTP biosynthesis via de novo pathway; UDP from UMP (UMPK route): step 1/1. Its activity is regulated as follows. Inhibited by UTP. In terms of biological role, catalyzes the reversible phosphorylation of UMP to UDP. The chain is Uridylate kinase from Azorhizobium caulinodans (strain ATCC 43989 / DSM 5975 / JCM 20966 / LMG 6465 / NBRC 14845 / NCIMB 13405 / ORS 571).